Here is a 444-residue protein sequence, read N- to C-terminus: MAPDPVAAKTPVQGPTPRYFTWDEVAQRSGCEERWLVIDRKVYDISEFTRRHPGGSRVISHYAGQDATDPFVAFHSNKGLVKKYMNSLLIGELSPEQPSFEPTKNKELTDEFRELRATVEQMGLMKANHVFFLLYLLHILLLDGAAWLTLWIFGTSFLPFLLCAVLLTAAQIQAGWLQHDLGHLSVFSTSKWNHLVHHFVIGHLKGVPASWWNHMHFQHHAKPNCFGKDPDINMHPFFFALGKILSVELGKQKKKYMPYNHQHKYFFLIGPPALVPFFFQWYVFYFVIQRKKWVDLAWMITFYIRLLLTYVPLLGLKAFLGLYFIVRFLESNWFVWVTQMNHIPMHIDHDRNMDWVSTQLQATCNVHKSAFNDWFSGHLNFQIEHHLFPMMPRHNYHKVAPLVQSLCAKHGIEYQSKPLLSAFADIIHSLKESGQLWLDAYLHQ.

N-acetylmethionine is present on Met-1. Residues Met-1–Gln-121 are Cytoplasmic-facing. One can recognise a Cytochrome b5 heme-binding domain in the interval Pro-17 to Ser-94. The helical transmembrane segment at Met-122–Leu-142 threads the bilayer. The Lumenal portion of the chain corresponds to Asp-143–Ala-146. Residues Trp-147–Leu-167 form a helical membrane-spanning segment. Residues Thr-168–Phe-267 lie on the Cytoplasmic side of the membrane. The Histidine box-1 signature appears at His-179–His-183. Residues His-216–His-220 carry the Histidine box-2 motif. Residues Leu-268–Ile-288 form a helical membrane-spanning segment. The Lumenal portion of the chain corresponds to Gln-289 to Arg-305. A helical transmembrane segment spans residues Leu-306–Val-326. The Cytoplasmic segment spans residues Arg-327 to Gln-444. The Histidine box-3 signature appears at Gln-382–His-386.

This sequence belongs to the fatty acid desaturase type 1 family. In terms of tissue distribution, widely expressed. Expressed in brain, liver and thymus (at protein level). Isoform 1 seems to be more abundant than isoform 2. Expression of isoform 2 is very low in spleen and not detectable in skeletal muscle.

It localises to the endoplasmic reticulum membrane. The protein localises to the mitochondrion. The catalysed reaction is (8Z,11Z,14Z)-eicosatrienoyl-CoA + 2 Fe(II)-[cytochrome b5] + O2 + 2 H(+) = (5Z,8Z,11Z,14Z)-eicosatetraenoyl-CoA + 2 Fe(III)-[cytochrome b5] + 2 H2O. It carries out the reaction (8Z,11Z,14Z,17Z)-eicosatetraenoyl-CoA + 2 Fe(II)-[cytochrome b5] + O2 + 2 H(+) = (5Z,8Z,11Z,14Z,17Z)-eicosapentaenoyl-CoA + 2 Fe(III)-[cytochrome b5] + 2 H2O. The enzyme catalyses (11E)-octadecenoyl-CoA + 2 Fe(II)-[cytochrome b5] + O2 + 2 H(+) = (5Z,11E)-octadecadienoyl-CoA + 2 Fe(III)-[cytochrome b5] + 2 H2O. Its pathway is lipid metabolism; polyunsaturated fatty acid biosynthesis. Functionally, acts as a front-end fatty acyl-coenzyme A (CoA) desaturase that introduces a cis double bond at carbon 5 located between a preexisting double bond and the carboxyl end of the fatty acyl chain. Involved in biosynthesis of highly unsaturated fatty acids (HUFA) from the essential polyunsaturated fatty acids (PUFA) linoleic acid (LA) (18:2n-6) and alpha-linolenic acid (ALA) (18:3n-3) precursors. Specifically, desaturates dihomo-gamma-linoleoate (DGLA) (20:3n-6) and eicosatetraenoate (ETA) (20:4n-3) to generate arachidonate (AA) (20:4n-6) and eicosapentaenoate (EPA) (20:5n-3), respectively. As a rate limiting enzyme for DGLA (20:3n-6) and AA (20:4n-6)-derived eicosanoid biosynthesis, controls the metabolism of inflammatory lipids like prostaglandin E2, critical for efficient acute inflammatory response and maintenance of epithelium homeostasis. Contributes to membrane phospholipid biosynthesis by providing AA (20:4n-6) as a major acyl chain esterified into phospholipids. In particular, regulates phosphatidylinositol-4,5-bisphosphate levels, modulating inflammatory cytokine production in T-cells. Also desaturates (11E)-octadecenoate (trans-vaccenoate)(18:1n-9), a metabolite in the biohydrogenation pathway of LA (18:2n-6). In terms of biological role, does not exhibit any catalytic activity toward 20:3n-6, but it may enhance FADS2 activity. The polypeptide is Acyl-CoA (8-3)-desaturase (Papio anubis (Olive baboon)).